We begin with the raw amino-acid sequence, 517 residues long: MSPDSRDPEAQRDVGLTKNTSSVNIPLESVKTDKTSNASPIMGPGEGPKIDDTLVSWSGPDDSQNPQNMPQWKKWVITWLLSFLNVWVTFSSTIFASAVRTTSLEYGVSRVVMTLGVSLTVLGFAVGPLIWGPMSEVIGRLTPFYFGYAVFCIFQIPVGVAQNVYTILICRFFIGFFGTSAMAVTPGVLADIFSPKDRGVAVSVYAAAAFIGPIFGPIVGGFVVDSSLGWRWTAWITLILASAFGLAALVFVPETYGPIILQRRAARLRQETRNFAYHSALDENPPTLNDIIFKYFLRPFQMLIKEPILLLVTLYISLVYGVLYLFFVAYPIEFLEVRRWTHAGVAALPLLAVMLGTLAGCLTILFVTGHTYPRKMAKMGRVPPEERLKLMMVGSVSLPIGLFWFGWTSSRSVHWFAQTAAGFPIGIGLALIWVQGLSFLIDVYLMFANSALAGNTLIRSAVGAAFPLFGAPMYHKLGVNWASSLLGFLSVAMIPIPVAFYYYGPKIRAMSKFSPKL.

Positions 1–12 are enriched in basic and acidic residues; the sequence is MSPDSRDPEAQR. Positions 1-45 are disordered; sequence MSPDSRDPEAQRDVGLTKNTSSVNIPLESVKTDKTSNASPIMGPG. A glycan (N-linked (GlcNAc...) asparagine) is linked at asparagine 19. The next 12 helical transmembrane spans lie at 75-95, 111-131, 141-161, 172-192, 204-224, 232-252, 308-328, 347-367, 390-410, 421-441, 457-475, and 485-505; these read WVIT…STIF, VVMT…PLIW, LTPF…VGVA, FFIG…LADI, VYAA…GFVV, WTAW…LVFV, ILLL…LFFV, ALPL…ILFV, LMMV…WTSS, AGFP…SFLI, LIRS…PMYH, and LLGF…YYGP.

Belongs to the major facilitator superfamily. CAR1 family.

The protein resides in the membrane. Functionally, MFS transporter; part of the gene cluster that mediates the biosynthesis the mycotoxin ascochitine, an o-quinone methide that plays a possible protective role against other microbial competitors in nature and is considered to be important for pathogenicity of legume-associated Didymella species. The chain is Ascochitine biosynthesis cluster MFS transporter from Didymella fabae (Leaf and pod spot disease fungus).